Reading from the N-terminus, the 709-residue chain is ATP-binding cassette sub-family F member 3 (709 aa).

N-acetylalanine is present on Ala2. The residue at position 83 (Ser83) is a Phosphoserine. Residues 129 to 143 are compositionally biased toward basic and acidic residues; that stretch reads RLKAKQEKRSEKDTL. Positions 129–171 are disordered; the sequence is RLKAKQEKRSEKDTLKTSNPLVLEEASASQAGSRKESRLESSG. Ser155, Ser157, and Ser161 each carry phosphoserine. The span at 161–171 shows a compositional bias: basic and acidic residues; that stretch reads SRKESRLESSG. ABC transporter domains lie at 178–424 and 492–707; these read VRIE…LNQQ and LQLD…RREG. ATP is bound at residue 210–217; that stretch reads GRNGLGKT. The residue at position 283 (Ser283) is a Phosphoserine. Position 525 to 532 (525 to 532) interacts with ATP; the sequence is GENGAGKS.

This sequence belongs to the ABC transporter superfamily. ABCF family. EF3 subfamily.

Its function is as follows. Displays an antiviral effect against flaviviruses in the presence of OAS1B. The polypeptide is ATP-binding cassette sub-family F member 3 (ABCF3) (Pongo abelii (Sumatran orangutan)).